The following is a 369-amino-acid chain: UDP-N-acetyl-3-dehydro-alpha-D-glucosamine 3-aminotranferase (369 aa).

Lysine 190 is modified (N6-(pyridoxal phosphate)lysine).

This sequence belongs to the DegT/DnrJ/EryC1 family. It depends on pyridoxal 5'-phosphate as a cofactor.

The catalysed reaction is UDP-2-acetamido-3-amino-2,3-dideoxy-alpha-D-glucopyranose + 2-oxoglutarate = UDP-2-acetamido-3-dehydro-2-deoxy-alpha-D-glucopyranose + L-glutamate. It participates in bacterial outer membrane biogenesis; LPS lipid A biosynthesis. Functionally, aminotranferase involved in the synthesis of 2,3-diamino-2,3-dideoxy-D-glucopyranose (GlcN3N), which is a component of lipid A in some species. Catalyzes the amination of UDP-2-acetamido-3-dehydro-2-deoxy-alpha-D-glucopyranose (UDP-3-oxo-GlcNAc) to UDP-2-acetamido-3-amino-2,3-dideoxy-alpha-D-glucopyranose (UDP-GlcNAc3N), using L-glutamate as the amine donor. Other amine donors, such as alanine and glutamine, can substitute for glutamate, but product formation is slower. The sequence is that of UDP-N-acetyl-3-dehydro-alpha-D-glucosamine 3-aminotranferase from Acidithiobacillus ferrooxidans (strain ATCC 23270 / DSM 14882 / CIP 104768 / NCIMB 8455) (Ferrobacillus ferrooxidans (strain ATCC 23270)).